The sequence spans 190 residues: RING finger protein 227 (190 aa).

The RING-type zinc finger occupies 18–81 (CNICFRPYNL…RRAVTCPFCR (64 aa)). The segment at 108-147 (ARAEREGDPMGSPAKDSGEDGEDDDGEAESEKGAGPPSAG) is disordered. Residues 126 to 135 (EDGEDDDGEA) are compositionally biased toward acidic residues.

This chain is RING finger protein 227, found in Mus musculus (Mouse).